Reading from the N-terminus, the 548-residue chain is ComP-specific O-oligosaccharyltransferase (548 aa).

Helical transmembrane passes span Ile8–Asn28, Leu32–Val52, Trp68–Phe88, Phe91–Glu111, Ile119–Ile139, Leu164–Leu184, Ser189–Thr209, Ser213–Ile233, Ile239–Ile259, Met331–Ile351, Leu363–Ala383, and Thr418–Ile438.

This sequence belongs to the PglL O-oligosaccharyltransferase family.

The protein localises to the cell membrane. Its function is as follows. Specifically catalyzes the glycosylation of the pilin-like competence factor ComP. The chain is ComP-specific O-oligosaccharyltransferase from Acinetobacter baylyi (strain ATCC 33305 / BD413 / ADP1).